A 239-amino-acid polypeptide reads, in one-letter code: uncharacterized protein (239 aa).

6 helical membrane-spanning segments follow: residues valine 30–isoleucine 50, leucine 76–isoleucine 96, leucine 107–isoleucine 127, phenylalanine 157–leucine 177, methionine 188–threonine 208, and leucine 214–leucine 234.

This sequence belongs to the TatC family.

It is found in the plastid. Its subcellular location is the chloroplast membrane. This is an uncharacterized protein from Cyanidium caldarium (Red alga).